The sequence spans 465 residues: G1/S-specific cyclin CLN3 (465 aa).

Residues 44–171 form the Cyclin N-terminal domain; sequence EMLHHLLSVE…HILKSLEWVV (128 aa).

It belongs to the cyclin family. As to quaternary structure, interacts with CDC28 and SLA1. Post-translationally, hyperphosphorylated. GRR1 preferentially mediates the degradation of hyperphosphorylated CLN3.

Its function is as follows. G1/S-specific cyclin essential for the control of the cell cycle at the G1/S (start) transition. CLN3 may be an upstream activator of the G1 cyclins which directly catalyze start. Required for budding and for cell cycle progression and morphogenesis in environment-induced hyphae. Degradation is mediated by GRR1. Through binding to CDC28, controls the phosphorylation of SLA1 which regulates cortical actin patch dynamics. The protein is G1/S-specific cyclin CLN3 (CLN3) of Candida albicans (strain SC5314 / ATCC MYA-2876) (Yeast).